A 427-amino-acid chain; its full sequence is Adenylosuccinate synthetase (427 aa).

Residues 12-18 (GDEGKGK) and 40-42 (GHT) each bind GTP. Residue Asp13 is the Proton acceptor of the active site. The Mg(2+) site is built by Asp13 and Gly40. IMP is bound by residues 13-16 (DEGK), 38-41 (NAGH), Thr128, Arg142, Gln223, Thr238, and Arg302. His41 acts as the Proton donor in catalysis. Residue 298-304 (TTTGRPR) coordinates substrate. GTP contacts are provided by residues Arg304, 330 to 332 (KLD), and 412 to 414 (AVG).

Belongs to the adenylosuccinate synthetase family. As to quaternary structure, homodimer. Mg(2+) serves as cofactor.

The protein resides in the cytoplasm. It carries out the reaction IMP + L-aspartate + GTP = N(6)-(1,2-dicarboxyethyl)-AMP + GDP + phosphate + 2 H(+). It functions in the pathway purine metabolism; AMP biosynthesis via de novo pathway; AMP from IMP: step 1/2. Plays an important role in the de novo pathway of purine nucleotide biosynthesis. Catalyzes the first committed step in the biosynthesis of AMP from IMP. This is Adenylosuccinate synthetase from Heliobacterium modesticaldum (strain ATCC 51547 / Ice1).